The sequence spans 157 residues: Aspartate carbamoyltransferase regulatory chain (157 aa).

Zn(2+) is bound by residues Cys108, Cys113, Cys138, and Cys141.

Belongs to the PyrI family. As to quaternary structure, contains catalytic and regulatory chains. Zn(2+) is required as a cofactor.

Involved in allosteric regulation of aspartate carbamoyltransferase. The polypeptide is Aspartate carbamoyltransferase regulatory chain (Korarchaeum cryptofilum (strain OPF8)).